The following is a 425-amino-acid chain: uncharacterized protein (425 aa).

Positions 55–181 (RYSHSLGVYE…DLDADRMDYL (127 aa)) constitute an HD domain.

This is an uncharacterized protein from Mycoplasma pneumoniae (strain ATCC 29342 / M129 / Subtype 1) (Mycoplasmoides pneumoniae).